The primary structure comprises 1366 residues: MNYSFTERKRVRKSFAKRVNNHQVPYLIATQLESYAKFLQADKPAMSRLTEGLQAAFTSAFPIVSNNGYARMEYVSYQLSQPPFDVKECQQRGYTYHSALRAKVRLIIYDREAPTKVKEVKESEVYMGEIPLMTENGSFVINGTERVIVSQLHRSPGVFFEHDKGKTHSSGKLLFSARIIPYRGSWLDFEFDPKDILYFRVDRRRKMPVTILLKAIGLNNEQILANFFNFDHFSLTANGGSMEFVPERLRGQLANFDVLDKNGVVVIQKDKRINAKHIRELEAAKTKTIAVPDDYLVGRVVARNIVDPDSGEILAYANDEITEELLATLRDAGIKQLETIYTNDLDSGAYISQTLRTDETADQMAARIAIYRMMRPGEPPTEDAVEALFQRLFYNEDTYDLSRVGRMKVNSRLNRPEMEGPMVLSNEDILDTIKSLVDLRNGKGEVDDIDHLGNRRVRCVGELAENQFRAGLSRVERAVKERLGQAETENLMPHDLINSKPISSAIREFFGSSQLSQFMDQTNPLSEITHKRRISALGPGGLTRERAGFEVRDVHPTHYGRVCPIETPEGPNIGLINSLALFARLNEHGFLETPYRKVSNSKVSDEVVYLSAIEEAKYVIAQANATIDKSGKLADELVSARQAGETIMVSPERIDFIDVAPSQIVSAAASLVPFLEHDDANRALMGANMSRQAVPCLRPDKPLVGTGLERIVAVDSGTVILATRGGIVDYVDANRIVIRVNDDETAAGEVGVDIYNLIKYTRSNQNTNINQRPIVQAGDRVVRGDVVADGASTDLGELALGQNMTVAFMPWNGYNFEDSILISEKVVAEDRYTSIHIEELSVVARDTKLGSEEITRDISNLAESQLSRLDESGIVYIGAEVEAGDVLVGKVTPKGETTLTPEEKLLRAIFGEKASDVKDTSLRVPSGMIGTVIDVQVFTREGIERDARAQAIIQEELQRYRLDLNDQLRIVEGDAFMRLEKLLIGKVANGGPQKLAKGTKIDKEYLASLDKYHWFDVRPADEEVATQVEAIKSSIEAKRKQFDEAFEEKRTKLTQGDDLQAGVTKMVKVYLAVKRRLQPGDKMAGRHGNKGVVSKIAPAEDMPFMADGRPVDIVLNPLGVPSRMNVGQILETHLGWAAQGIGKRIDEMVRQQVKQAELRKFLKQLYNETGRIEDIDNFTDEQITVLAENLRQGLPFATPVFDGATEAEIGRMLELAYPEEVATSLKMTPSRQQMILCDGRTGDQFERPVTVGVMHVLKLHHLVDDKMHARSTGPYSLVTQQPLGGKAQFGGQRFGEMEVWALEAYGASYVLQEMLTVKSDDVAGRTKVYENIVKGEHTIDAGMPESFNVLVKEIRSLGIDIDMERN.

Belongs to the RNA polymerase beta chain family. The RNAP catalytic core consists of 2 alpha, 1 beta, 1 beta' and 1 omega subunit. When a sigma factor is associated with the core the holoenzyme is formed, which can initiate transcription.

The catalysed reaction is RNA(n) + a ribonucleoside 5'-triphosphate = RNA(n+1) + diphosphate. Its function is as follows. DNA-dependent RNA polymerase catalyzes the transcription of DNA into RNA using the four ribonucleoside triphosphates as substrates. The chain is DNA-directed RNA polymerase subunit beta from Polynucleobacter asymbioticus (strain DSM 18221 / CIP 109841 / QLW-P1DMWA-1) (Polynucleobacter necessarius subsp. asymbioticus).